The following is a 1115-amino-acid chain: Disheveled-associated activator of morphogenesis 2 (1115 aa).

The GBD/FH3 domain occupies 40–416 (GPIPNPEELN…QIVLQDERGV (377 aa)). Residues 434-515 (MLINENEVKQ…ELVARHNESS (82 aa)) adopt a coiled-coil conformation. Disordered stretches follow at residues 510 to 605 (RHNE…SHPL) and 655 to 697 (QEGP…SATG). The FH1 domain maps to 518-694 (PVSSPPPPGG…TEKASRSMVS (177 aa)). A compositionally biased stretch (pro residues) spans 540–583 (LPPPPPPLPFDSCPPPPAPPLPPGGPPIPPGAPPCFSSGPPPSH). The FH2 domain maps to 595-1042 (KKRIPQPSHP…DERRARMEFM (448 aa)). Positions 1065 to 1095 (EESGEFDDLVSALRSGEVFDKDLSKFKRNRK) constitute a DAD domain.

This sequence belongs to the formin homology family. Interacts with DVL3. Interacts with INF2. As to expression, in early embryogenesis, expression is confined to embryonic ectoderm. Highly dynamic expression in later stages of gastrulation. In early somite stages, detected in posterior node and persists until 9-10 somites have developed when expression is concentrated in the chordoneural hinge. During organogenesis, expressed in the CNS, PNS, liver primordia, limb buds and genital tubercle.

Functionally, key regulator of the Wnt signaling pathway, which is required for various processes during development, such as dorsal patterning, determination of left/right symmetry or myelination in the central nervous system. Acts downstream of Wnt ligands and upstream of beta-catenin (CTNNB1). Required for canonical Wnt signaling pathway during patterning in the dorsal spinal cord by promoting the aggregation of Disheveled (Dvl) complexes, thereby clustering and formation of Wnt receptor signalosomes and potentiating Wnt activity. During dorsal patterning of the spinal cord, inhibits oligodendrocytes differentiation via interaction with PIP5K1A. Also regulates non-canonical Wnt signaling pathway. Acts downstream of PITX2 in the developing gut and is required for left/right asymmetry within dorsal mesentery: affects mesenchymal condensation by lengthening cadherin-based junctions through WNT5A and non-canonical Wnt signaling, inducing polarized condensation in the left dorsal mesentery necessary to initiate gut rotation. Together with DAAM1, required for myocardial maturation and sarcomere assembly. Is a regulator of actin nucleation and elongation, filopodia formation and podocyte migration. The sequence is that of Disheveled-associated activator of morphogenesis 2 from Mus musculus (Mouse).